Consider the following 357-residue polypeptide: Phosphoribosylformylglycinamidine cyclo-ligase (357 aa).

Belongs to the AIR synthase family.

The protein resides in the cytoplasm. The enzyme catalyses 2-formamido-N(1)-(5-O-phospho-beta-D-ribosyl)acetamidine + ATP = 5-amino-1-(5-phospho-beta-D-ribosyl)imidazole + ADP + phosphate + H(+). The protein operates within purine metabolism; IMP biosynthesis via de novo pathway; 5-amino-1-(5-phospho-D-ribosyl)imidazole from N(2)-formyl-N(1)-(5-phospho-D-ribosyl)glycinamide: step 2/2. This chain is Phosphoribosylformylglycinamidine cyclo-ligase, found in Rhizobium etli (strain ATCC 51251 / DSM 11541 / JCM 21823 / NBRC 15573 / CFN 42).